Reading from the N-terminus, the 117-residue chain is Small ribosomal subunit protein bS16 (117 aa).

Over residues L81 to P90 the composition is skewed to basic residues. Positions L81 to V117 are disordered.

It belongs to the bacterial ribosomal protein bS16 family.

The protein is Small ribosomal subunit protein bS16 of Bartonella quintana (strain Toulouse) (Rochalimaea quintana).